Consider the following 334-residue polypeptide: Ribosomal RNA small subunit methyltransferase H (334 aa).

Residues Gly-53–His-55, Asp-72, Phe-99, Asp-122, and His-129 each bind S-adenosyl-L-methionine.

Belongs to the methyltransferase superfamily. RsmH family.

It is found in the cytoplasm. It carries out the reaction cytidine(1402) in 16S rRNA + S-adenosyl-L-methionine = N(4)-methylcytidine(1402) in 16S rRNA + S-adenosyl-L-homocysteine + H(+). Its function is as follows. Specifically methylates the N4 position of cytidine in position 1402 (C1402) of 16S rRNA. The polypeptide is Ribosomal RNA small subunit methyltransferase H (Leptospira interrogans serogroup Icterohaemorrhagiae serovar copenhageni (strain Fiocruz L1-130)).